Consider the following 329-residue polypeptide: Cathepsin K (329 aa).

Positions 1–15 (MWGLTVLLLPVVSFA) are cleaved as a signal peptide. The propeptide at 16–114 (LYPEEILDTQ…TLYIPDWEGR (99 aa)) is activation peptide. N103 carries N-linked (GlcNAc...) asparagine glycosylation. Intrachain disulfides connect C136-C177, C170-C210, and C269-C318. Residue C139 is part of the active site. Active-site residues include H276 and N296.

The protein belongs to the peptidase C1 family.

The protein localises to the lysosome. Its subcellular location is the secreted. It localises to the apical cell membrane. It carries out the reaction Broad proteolytic activity. With small-molecule substrates and inhibitors, the major determinant of specificity is P2, which is preferably Leu, Met &gt; Phe, and not Arg.. Its function is as follows. Thiol protease involved in osteoclastic bone resorption and may participate partially in the disorder of bone remodeling. Displays potent endoprotease activity against fibrinogen at acid pH. May play an important role in extracellular matrix degradation. Involved in the release of thyroid hormone thyroxine (T4) by limited proteolysis of TG/thyroglobulin in the thyroid follicle lumen. This chain is Cathepsin K (CTSK), found in Bos taurus (Bovine).